We begin with the raw amino-acid sequence, 490 residues long: ATP synthase subunit beta (490 aa).

173 to 180 (GGAGVGKT) is an ATP binding site.

Belongs to the ATPase alpha/beta chains family. In terms of assembly, F-type ATPases have 2 components, CF(1) - the catalytic core - and CF(0) - the membrane proton channel. CF(1) has five subunits: alpha(3), beta(3), gamma(1), delta(1), epsilon(1). CF(0) has three main subunits: a(1), b(2) and c(9-12). The alpha and beta chains form an alternating ring which encloses part of the gamma chain. CF(1) is attached to CF(0) by a central stalk formed by the gamma and epsilon chains, while a peripheral stalk is formed by the delta and b chains.

The protein resides in the cell membrane. It carries out the reaction ATP + H2O + 4 H(+)(in) = ADP + phosphate + 5 H(+)(out). Its function is as follows. Produces ATP from ADP in the presence of a proton gradient across the membrane. The catalytic sites are hosted primarily by the beta subunits. This Bifidobacterium longum (strain DJO10A) protein is ATP synthase subunit beta.